Consider the following 219-residue polypeptide: Ribose-5-phosphate isomerase A (219 aa).

Residues 28-31 (SGST), 81-84 (DGAD), and 94-97 (KGGG) contribute to the substrate site. Catalysis depends on Glu-103, which acts as the Proton acceptor. Lys-121 is a substrate binding site.

The protein belongs to the ribose 5-phosphate isomerase family. As to quaternary structure, homodimer.

It catalyses the reaction aldehydo-D-ribose 5-phosphate = D-ribulose 5-phosphate. It functions in the pathway carbohydrate degradation; pentose phosphate pathway; D-ribose 5-phosphate from D-ribulose 5-phosphate (non-oxidative stage): step 1/1. Functionally, catalyzes the reversible conversion of ribose-5-phosphate to ribulose 5-phosphate. This Mannheimia succiniciproducens (strain KCTC 0769BP / MBEL55E) protein is Ribose-5-phosphate isomerase A.